Here is a 267-residue protein sequence, read N- to C-terminus: Tryptophan synthase alpha chain (267 aa).

Catalysis depends on proton acceptor residues Glu-44 and Asp-55.

Belongs to the TrpA family. In terms of assembly, tetramer of two alpha and two beta chains.

The catalysed reaction is (1S,2R)-1-C-(indol-3-yl)glycerol 3-phosphate + L-serine = D-glyceraldehyde 3-phosphate + L-tryptophan + H2O. The protein operates within amino-acid biosynthesis; L-tryptophan biosynthesis; L-tryptophan from chorismate: step 5/5. The alpha subunit is responsible for the aldol cleavage of indoleglycerol phosphate to indole and glyceraldehyde 3-phosphate. This chain is Tryptophan synthase alpha chain, found in Coxiella burnetii (strain Dugway 5J108-111).